The following is a 91-amino-acid chain: Small integral membrane protein 12-A (91 aa).

The chain crosses the membrane as a helical span at residues 12-34 (YAPYITFPVAFVVGAVGYQLEWF).

It belongs to the SMIM12 family.

Its subcellular location is the membrane. The sequence is that of Small integral membrane protein 12-A (smim12-a) from Xenopus laevis (African clawed frog).